Reading from the N-terminus, the 500-residue chain is Probable betaine aldehyde dehydrogenase (500 aa).

An NAD(+)-binding site is contributed by 249–254; sequence GSLATG. Residue Glu271 is the Proton acceptor of the active site. The active-site Nucleophile is Cys305.

This sequence belongs to the aldehyde dehydrogenase family.

The catalysed reaction is betaine aldehyde + NAD(+) + H2O = glycine betaine + NADH + 2 H(+). It functions in the pathway amine and polyamine biosynthesis; betaine biosynthesis via choline pathway; betaine from betaine aldehyde: step 1/1. The protein is Probable betaine aldehyde dehydrogenase (meu8) of Schizosaccharomyces pombe (strain 972 / ATCC 24843) (Fission yeast).